We begin with the raw amino-acid sequence, 1213 residues long: DNA-directed RNA polymerase subunit beta (1213 aa).

The segment at 1169–1213 (SRMAEEQEKKKLAEETGKSGDKKENKKDADKPVAPADESDDKVSK) is disordered. A compositionally biased stretch (basic and acidic residues) spans 1171–1199 (MAEEQEKKKLAEETGKSGDKKENKKDADK).

The protein belongs to the RNA polymerase beta chain family. The RNAP catalytic core consists of 2 alpha, 1 beta, 1 beta' and 1 omega subunit. When a sigma factor is associated with the core the holoenzyme is formed, which can initiate transcription.

The enzyme catalyses RNA(n) + a ribonucleoside 5'-triphosphate = RNA(n+1) + diphosphate. DNA-dependent RNA polymerase catalyzes the transcription of DNA into RNA using the four ribonucleoside triphosphates as substrates. The sequence is that of DNA-directed RNA polymerase subunit beta from Lactobacillus helveticus (strain DPC 4571).